A 110-amino-acid chain; its full sequence is UPF0145 protein BLD_1357 (110 aa).

It belongs to the UPF0145 family.

The polypeptide is UPF0145 protein BLD_1357 (Bifidobacterium longum (strain DJO10A)).